The sequence spans 393 residues: MILMVLEIKNGIYWVGVIDWEIRDFHGYGTPYGSTYNSYLIKDKKNVLIDTAKDYMFNELIYGISKFIDPKDLDYIIVNHVEKDHSGCVDKLVEISNATIITNEKGKEHLSLYYDTKDWDFIIVDTGDEINIGDRTLKFIRTPMLHWPDNMLTYCKEEKILFSNDAFGQHIASSERFDYEIGEGIFEHAKDYFANILMPYKMLIPDAIKAVKNLDIELICPSHGVIWKEYINEIIEKYNEWAMNKTKNKAVIVYDTMYNSTKKMAHAIAEGLMEKGVEVKIYRVCETSLSRIMTEILDAKYVLVGSPTVNRNLYPEVGKFLAYMDCIRPLDKIGVAFGSYGWMECATEKIKEIFKNLGFKIVDDECLTVRFAPKEEHLKKCYEFGKRLADIGF.

The Flavodoxin-like domain maps to 250–389; the sequence is AVIVYDTMYN…KCYEFGKRLA (140 aa).

This is an uncharacterized protein from Methanocaldococcus jannaschii (strain ATCC 43067 / DSM 2661 / JAL-1 / JCM 10045 / NBRC 100440) (Methanococcus jannaschii).